A 233-amino-acid polypeptide reads, in one-letter code: Adenosine 5'-phosphosulfate reductase (233 aa).

The [4Fe-4S] cluster site is built by Cys-120, Cys-121, Cys-203, and Cys-206. Cys-229 acts as the Nucleophile; cysteine thiosulfonate intermediate in catalysis.

The protein belongs to the PAPS reductase family. CysH subfamily. Requires [4Fe-4S] cluster as cofactor.

Its subcellular location is the cytoplasm. The enzyme catalyses [thioredoxin]-disulfide + sulfite + AMP + 2 H(+) = adenosine 5'-phosphosulfate + [thioredoxin]-dithiol. Its pathway is sulfur metabolism; hydrogen sulfide biosynthesis; sulfite from sulfate. Its function is as follows. Catalyzes the formation of sulfite from adenosine 5'-phosphosulfate (APS) using thioredoxin as an electron donor. The chain is Adenosine 5'-phosphosulfate reductase from Bacillus velezensis (strain DSM 23117 / BGSC 10A6 / LMG 26770 / FZB42) (Bacillus amyloliquefaciens subsp. plantarum).